A 507-amino-acid chain; its full sequence is MPDNAQKYVAAIDQGTTSSRCIIFDHGGAIVAVDQREHRQIFPKPGWVEHDATEIWSKVQAVVAGAIAKAGLRADQLSALGITNQRETTVLWDRATGKPVHNAIVWQDTRTSALCHELGGSDGQDRFREQTGLPLASYFSGPKAAWLLDNVPGLRARAERGEIAFGTIDSWLIWNLTGGTDGGRHVTDVTNAGRTMLMNLETLQWDRSILSAMNVPEAVLPEIRSSSEVYGTAVGQLSGVPVASALGDQQAAVFGQACYDVGTAKNTYGTGSFLLLNTGNRPVPSKNGLLTTMGYKIGGEAPVYCLEGSIAITGALVQWFRDQLGIIRTADEIETLAASVDDNGGAYIVPAFSGLFAPYWRSDARGVVTGLTRYVTKAHLARAVLEATSWQTREVVDAMYQDSGVRITTLKVDGGMTKNNLLMQHQADVLGVPVIRPRVSETTCLGAAYAAGLATGVWNDLDELKSHWQKDVEWTPSMEASERDREYHNWRKAVEKSFGWHEEDGVN.

ADP is bound at residue Thr16. ATP contacts are provided by Thr16, Thr17, and Ser18. Thr16 is a binding site for sn-glycerol 3-phosphate. Arg20 is a binding site for ADP. Sn-glycerol 3-phosphate-binding residues include Arg86, Glu87, Tyr138, and Asp248. Positions 86, 87, 138, 248, and 249 each coordinate glycerol. Positions 270 and 314 each coordinate ADP. Residues Thr270, Gly314, Gln318, and Gly415 each contribute to the ATP site. Positions 415 and 419 each coordinate ADP.

The protein belongs to the FGGY kinase family.

The catalysed reaction is glycerol + ATP = sn-glycerol 3-phosphate + ADP + H(+). It participates in polyol metabolism; glycerol degradation via glycerol kinase pathway; sn-glycerol 3-phosphate from glycerol: step 1/1. Inhibited by fructose 1,6-bisphosphate (FBP). Key enzyme in the regulation of glycerol uptake and metabolism. Catalyzes the phosphorylation of glycerol to yield sn-glycerol 3-phosphate. The polypeptide is Glycerol kinase 2 (Streptomyces avermitilis (strain ATCC 31267 / DSM 46492 / JCM 5070 / NBRC 14893 / NCIMB 12804 / NRRL 8165 / MA-4680)).